The sequence spans 330 residues: VERPPVWLMRQAGRYMKSYQNLCEKYPLFRERSENVDLVVEISLQPWKVFKPDGVILFSDILTPLPGMNIPFDIVKGKGPVIYDPLRTAAAVNEVREFVPEEWVPYVGQALNLLRGEVKNEAAVLGFVGAPFTLASYCVEGGSSKNFSKIKRMAFAEPAILHNLLQKFTTSMANYIKYQADNGAQAVQIFDSWATELSPVDFEEFSLPYLKQIVDSVKETHPDLPLILYASGSGGLLERLPLTGVDVVSLDWTVDMAEGRKRLGSNIAVQGNVDPGVLFGSKEFITKRIYDTVQKAGSQGHVLNLGHGIKVGTPEENVAHFFEVAKGIRY.

Residues 10 to 14 (RQAGR), F29, S59, D60, Y137, S192, and H307 each bind substrate.

It belongs to the uroporphyrinogen decarboxylase family. Homodimer.

It is found in the plastid. It localises to the chloroplast. It carries out the reaction uroporphyrinogen III + 4 H(+) = coproporphyrinogen III + 4 CO2. It functions in the pathway porphyrin-containing compound metabolism; protoporphyrin-IX biosynthesis; coproporphyrinogen-III from 5-aminolevulinate: step 4/4. In terms of biological role, catalyzes the decarboxylation of four acetate groups of uroporphyrinogen-III to yield coproporphyrinogen-III. The polypeptide is Uroporphyrinogen decarboxylase (DCUP) (Hordeum vulgare (Barley)).